Reading from the N-terminus, the 116-residue chain is uncharacterized protein (116 aa).

A disordered region spans residues Val76 to Asn116. Over residues Arg85 to Asn99 the composition is skewed to low complexity.

This is an uncharacterized protein from Glycine max (Soybean).